We begin with the raw amino-acid sequence, 346 residues long: Haptoglobin-related protein (346 aa).

The not cleaved signal peptide spans 1 to 16; that stretch reads DLGAVIYLLLWGRQLF. A Sushi domain is found at 32 to 85; the sequence is FPKPPEIANGYVEHLFRYQRKNYYRLRTEGDGVYTLNDKKQWINKAVGDKLPEC. Residues 102–344 enclose the Peptidase S1 domain; that stretch reads ILGGHLDAKG…IHVWVQKTIA (243 aa). Disulfide bonds link Cys249-Cys280 and Cys291-Cys321.

The protein belongs to the peptidase S1 family.

Its subcellular location is the secreted. In terms of biological role, primate-specific plasma protein associated with apolipoprotein L-I (apoL-I)-containing high-density lipoprotein (HDL). Binds hemoglobin with high affinity and may contribute to the clearance of cell-free hemoglobin to allow hepatic recycling of heme iron. The sequence is that of Haptoglobin-related protein (HPR) from Pan troglodytes (Chimpanzee).